Reading from the N-terminus, the 552-residue chain is uncharacterized protein (552 aa).

Residues 8 to 200 (KLFADMIIQG…LLCVYEGFLK (193 aa)) form the DhaL domain.

This is an uncharacterized protein from Staphylococcus epidermidis (strain ATCC 35984 / DSM 28319 / BCRC 17069 / CCUG 31568 / BM 3577 / RP62A).